The chain runs to 553 residues: Glutamine--tRNA ligase (553 aa).

The 'HIGH' region signature appears at 34-44 (PEPNGYLHIGH). Residues 35-37 (EPN) and 41-47 (HIGHAKS) each bind ATP. Residues D68 and Y213 each contribute to the L-glutamine site. ATP-binding positions include T232 and 262 to 263 (RL). Residues 269 to 273 (LTSKR) carry the 'KMSKS' region motif.

The protein belongs to the class-I aminoacyl-tRNA synthetase family. Monomer.

It is found in the cytoplasm. The catalysed reaction is tRNA(Gln) + L-glutamine + ATP = L-glutaminyl-tRNA(Gln) + AMP + diphosphate. The polypeptide is Glutamine--tRNA ligase (Psychromonas ingrahamii (strain DSM 17664 / CCUG 51855 / 37)).